Here is a 293-residue protein sequence, read N- to C-terminus: Small ribosomal subunit protein uS5 (293 aa).

The segment at 1-55 (MADDAGAAGGPGGPGGPGLGGRGGFRGGFGSGLRGRGRGRGRGRGRGRGARGGKA) is disordered. Position 2 is an N-acetylalanine (A2). Gly residues predominate over residues 7–34 (AAGGPGGPGGPGLGGRGGFRGGFGSGLR). 14 repeat units span residues 9 to 11 (GGP), 12 to 14 (GGP), 15 to 17 (GGP), 22 to 25 (RGGF), 26 to 29 (RGGF), 34 to 35 (RG), 36 to 37 (RG), 38 to 39 (RG), 40 to 41 (RG), 42 to 43 (RG), 44 to 45 (RG), 46 to 47 (RG), 48 to 49 (RG), and 51 to 52 (RG). Residues 9–17 (GGPGGPGGP) are 3 X 3 AA tandem repeats of G-G-P. The interval 22 to 29 (RGGFRGGF) is 2 X 4 AA tandem repeats of R-G-G-F. Residues 34–52 (RGRGRGRGRGRGRGRGARG) form a 9 X 2 AA tandem repeats of R-G region. The span at 35-51 (GRGRGRGRGRGRGRGAR) shows a compositional bias: basic residues. Glycyl lysine isopeptide (Lys-Gly) (interchain with G-Cter in ubiquitin) cross-links involve residues K54 and K58. An S5 DRBM domain is found at 102–165 (LKDEVLKIMP…ILAKLSIVPV (64 aa)). Position 252 is a phosphothreonine (T252). K263 carries the N6-acetyllysine modification. At S264 the chain carries Phosphoserine. At T270 the chain carries Phosphothreonine. The residue at position 275 (K275) is an N6-acetyllysine; alternate. Residue K275 forms a Glycyl lysine isopeptide (Lys-Gly) (interchain with G-Cter in SUMO1); alternate linkage. K275 is covalently cross-linked (Glycyl lysine isopeptide (Lys-Gly) (interchain with G-Cter in SUMO2); alternate). K275 is covalently cross-linked (Glycyl lysine isopeptide (Lys-Gly) (interchain with G-Cter in ubiquitin); alternate). The residue at position 281 (S281) is a Phosphoserine.

It belongs to the universal ribosomal protein uS5 family. Component of the small ribosomal subunit. Interacts with zinc finger protein ZNF277 (via zinc-finger domains); the interaction is direct; the interaction is extra-ribosomal. Interaction with ZNF277 competes with the binding of RPS2 to protein arginine methyltransferase PRMT3. Post-translationally, citrullinated by PADI4 in the Arg/Gly-rich region. Asymmetric arginine dimethylation by PRMT3 occurs at multiple sites in the Arg/Gly-rich region. In terms of processing, monoubiquitinated at Lys-54 and Lys-58 by RNF10 when a ribosome has stalled during translation, leading to its degradation by the proteasome. Deubiquitinated at Lys-54 and Lys-58 by USP10, preventing degradation by the proteasome and promoting 40S ribosome subunit recycling following ribosome dissociation.

It is found in the cytoplasm. The protein resides in the nucleus. The protein localises to the nucleolus. Functionally, component of the ribosome, a large ribonucleoprotein complex responsible for the synthesis of proteins in the cell. The small ribosomal subunit (SSU) binds messenger RNAs (mRNAs) and translates the encoded message by selecting cognate aminoacyl-transfer RNA (tRNA) molecules. The large subunit (LSU) contains the ribosomal catalytic site termed the peptidyl transferase center (PTC), which catalyzes the formation of peptide bonds, thereby polymerizing the amino acids delivered by tRNAs into a polypeptide chain. The nascent polypeptides leave the ribosome through a tunnel in the LSU and interact with protein factors that function in enzymatic processing, targeting, and the membrane insertion of nascent chains at the exit of the ribosomal tunnel. Plays a role in the assembly and function of the 40S ribosomal subunit. Mutations in this protein affects the control of translational fidelity. Involved in nucleolar processing of pre-18S ribosomal RNA and ribosome assembly. This Rattus norvegicus (Rat) protein is Small ribosomal subunit protein uS5 (Rps2).